Here is a 130-residue protein sequence, read N- to C-terminus: Sulfurtransferase TusD (130 aa).

Residue cysteine 80 is the Cysteine persulfide intermediate of the active site.

The protein belongs to the DsrE/TusD family. In terms of assembly, heterohexamer, formed by a dimer of trimers. The hexameric TusBCD complex contains 2 copies each of TusB, TusC and TusD. The TusBCD complex interacts with TusE.

The protein localises to the cytoplasm. Functionally, part of a sulfur-relay system required for 2-thiolation of 5-methylaminomethyl-2-thiouridine (mnm(5)s(2)U) at tRNA wobble positions. Accepts sulfur from TusA and transfers it in turn to TusE. The protein is Sulfurtransferase TusD of Proteus mirabilis (strain HI4320).